The primary structure comprises 230 residues: Prolactin-6A1 (230 aa).

The N-terminal stretch at 1–29 is a signal peptide; that stretch reads MLSLSQPCFSGTLLMLLASNFLLWKNVAP. Asn-57 is a glycosylation site (N-linked (GlcNAc...) asparagine). Intrachain disulfides connect Cys-89-Cys-205 and Cys-222-Cys-230.

Belongs to the somatotropin/prolactin family. As to expression, expressed in both placenta and decidual tissues. Detected first in deciduals cells early in gestation and in trophoblasts later in pregnancy.

It is found in the secreted. This Mus musculus (Mouse) protein is Prolactin-6A1 (Prl6a1).